The sequence spans 353 residues: S-adenosylmethionine:tRNA ribosyltransferase-isomerase (353 aa).

This sequence belongs to the QueA family. In terms of assembly, monomer.

The protein localises to the cytoplasm. The catalysed reaction is 7-aminomethyl-7-carbaguanosine(34) in tRNA + S-adenosyl-L-methionine = epoxyqueuosine(34) in tRNA + adenine + L-methionine + 2 H(+). The protein operates within tRNA modification; tRNA-queuosine biosynthesis. Its function is as follows. Transfers and isomerizes the ribose moiety from AdoMet to the 7-aminomethyl group of 7-deazaguanine (preQ1-tRNA) to give epoxyqueuosine (oQ-tRNA). This chain is S-adenosylmethionine:tRNA ribosyltransferase-isomerase, found in Maricaulis maris (strain MCS10) (Caulobacter maris).